The following is a 670-amino-acid chain: Rhophilin-1 (670 aa).

A disordered region spans residues 1–20 (MILEERPDGAGAGEESPRLQ). An REM-1 domain is found at 23-97 (DSLTQIQCGQ…LEELSGGVDP (75 aa)). S24 carries the phosphoserine modification. The BRO1 domain occupies 108 to 457 (PMIPLGLKET…LAKYAELDRE (350 aa)). Positions 513-592 (PVHLTRGEGG…ASLQVVSLLP (80 aa)) constitute a PDZ domain. A disordered region spans residues 616 to 670 (QREHGCKTPASTWASPRPLLNWSRKAQQGKTGGCPQPCAPVKPAPPSSLKHPGWP). The segment covering 652–661 (PCAPVKPAPP) has biased composition (pro residues).

The protein belongs to the RHPN family. In terms of assembly, binds specifically to GTP-Rho. Interacts with ROPN1.

Its function is as follows. Has no enzymatic activity. May serve as a target for Rho, and interact with some cytoskeletal component upon Rho binding or relay a Rho signal to other molecules. This Homo sapiens (Human) protein is Rhophilin-1.